Here is a 364-residue protein sequence, read N- to C-terminus: Nucleosome assembly protein 1;2 (364 aa).

Residues 32–86 are a coiled coil; that stretch reads VESIKNTLQGLAARHTDVLESLEPKVRKRVEVLREIQSQHDDLEAKFFEERAALE. The Nuclear export signal signature appears at 53 to 68; the sequence is LEPKVRKRVEVLREIQ. Positions 227–232 match the Nuclear localization signal motif; that stretch reads KKKPKK. 2 disordered regions span residues 250-269 and 301-364; these read FNFF…DEDT and GEAA…CKQQ. Acidic residues-rich tracts occupy residues 259–269 and 304–340; these read PDDDEEIDEDT and AQDE…DDED. Cys-361 is modified (cysteine methyl ester). A lipid anchor (S-farnesyl cysteine) is attached at Cys-361. Positions 362 to 364 are cleaved as a propeptide — removed in mature form; it reads KQQ.

This sequence belongs to the nucleosome assembly protein (NAP) family. As to quaternary structure, binds preferentially histone H1 in vitro. In terms of tissue distribution, highly expressed in tissues exhibiting active cell-division activities, such as root and shoot meristems and young flowers.

The protein resides in the nucleus. It is found in the cytoplasm. May modulate chromatin structure by regulation of nucleosome assembly/disassembly. The protein is Nucleosome assembly protein 1;2 (NAP1;2) of Oryza sativa subsp. indica (Rice).